A 95-amino-acid chain; its full sequence is Integration host factor subunit beta (95 aa).

Belongs to the bacterial histone-like protein family. In terms of assembly, heterodimer of an alpha and a beta chain.

Functionally, this protein is one of the two subunits of integration host factor, a specific DNA-binding protein that functions in genetic recombination as well as in transcriptional and translational control. This chain is Integration host factor subunit beta, found in Shewanella pealeana (strain ATCC 700345 / ANG-SQ1).